We begin with the raw amino-acid sequence, 346 residues long: Biotin synthase (346 aa).

Positions 40-264 constitute a Radical SAM core domain; sequence NEVQVSTLLS…MMPHSHVRLS (225 aa). Cys55, Cys59, and Cys62 together coordinate [4Fe-4S] cluster. [2Fe-2S] cluster-binding residues include Cys99, Cys130, Cys190, and Arg262.

This sequence belongs to the radical SAM superfamily. Biotin synthase family. As to quaternary structure, homodimer. It depends on [4Fe-4S] cluster as a cofactor. Requires [2Fe-2S] cluster as cofactor.

It carries out the reaction (4R,5S)-dethiobiotin + (sulfur carrier)-SH + 2 reduced [2Fe-2S]-[ferredoxin] + 2 S-adenosyl-L-methionine = (sulfur carrier)-H + biotin + 2 5'-deoxyadenosine + 2 L-methionine + 2 oxidized [2Fe-2S]-[ferredoxin]. Its pathway is cofactor biosynthesis; biotin biosynthesis; biotin from 7,8-diaminononanoate: step 2/2. In terms of biological role, catalyzes the conversion of dethiobiotin (DTB) to biotin by the insertion of a sulfur atom into dethiobiotin via a radical-based mechanism. This is Biotin synthase from Colwellia psychrerythraea (strain 34H / ATCC BAA-681) (Vibrio psychroerythus).